Here is a 274-residue protein sequence, read N- to C-terminus: tRNA dimethylallyltransferase (274 aa).

Positions 9–12 are interaction with substrate tRNA; sequence DSLS.

It belongs to the IPP transferase family. As to quaternary structure, monomer. Mg(2+) is required as a cofactor.

It catalyses the reaction adenosine(37) in tRNA + dimethylallyl diphosphate = N(6)-dimethylallyladenosine(37) in tRNA + diphosphate. Functionally, catalyzes the transfer of a dimethylallyl group onto the adenine at position 37 in tRNAs that read codons beginning with uridine, leading to the formation of N6-(dimethylallyl)adenosine (i(6)A). This Helicobacter pylori (strain P12) protein is tRNA dimethylallyltransferase (miaA).